Here is a 666-residue protein sequence, read N- to C-terminus: DNA-directed RNA polymerase subunit beta' (666 aa).

Cys-69, Cys-71, Cys-87, and Cys-90 together coordinate Zn(2+). 3 residues coordinate Mg(2+): Asp-489, Asp-491, and Asp-493.

This sequence belongs to the RNA polymerase beta' chain family. RpoC1 subfamily. In plastids the minimal PEP RNA polymerase catalytic core is composed of four subunits: alpha, beta, beta', and beta''. When a (nuclear-encoded) sigma factor is associated with the core the holoenzyme is formed, which can initiate transcription. The cofactor is Mg(2+). Zn(2+) is required as a cofactor.

It localises to the plastid. The protein resides in the chloroplast. The catalysed reaction is RNA(n) + a ribonucleoside 5'-triphosphate = RNA(n+1) + diphosphate. DNA-dependent RNA polymerase catalyzes the transcription of DNA into RNA using the four ribonucleoside triphosphates as substrates. This chain is DNA-directed RNA polymerase subunit beta', found in Chara vulgaris (Common stonewort).